The sequence spans 398 residues: Probable transcription factor PosF21 (398 aa).

Disordered regions lie at residues 1–46 (MDKE…HDIS) and 112–150 (ATSS…NSLG). Over residues 7–19 (PAPPCGGLPPPSP) the composition is skewed to pro residues. The segment covering 125 to 148 (AWKNETMMQTGTGSTSNPQNTVNS) has biased composition (polar residues). The bZIP domain maps to 201-264 (DPKRAKRIWA…NGLTVENNEL (64 aa)). The basic motif stretch occupies residues 203-224 (KRAKRIWANRQSAARSKERKTR). The segment at 229–264 (LERKVQTLQTEATTLSAQLTLLQRDTNGLTVENNEL) is leucine-zipper.

Belongs to the bZIP family.

Its subcellular location is the nucleus. Functionally, putative transcription factor with an activatory role. The sequence is that of Probable transcription factor PosF21 (POSF21) from Arabidopsis thaliana (Mouse-ear cress).